A 92-amino-acid polypeptide reads, in one-letter code: N(2)-fixation sustaining protein CowN (92 aa).

The protein belongs to the CowN family.

Is required to sustain N(2)-dependent growth in the presence of low levels of carbon monoxide (CO). Probably acts by protecting the N(2) fixation ability of the nitrogenase complex, which is inactivated in the presence of CO. The sequence is that of N(2)-fixation sustaining protein CowN from Cereibacter sphaeroides (strain KD131 / KCTC 12085) (Rhodobacter sphaeroides).